The sequence spans 162 residues: Phosphopantetheine adenylyltransferase (162 aa).

Position 9 (Thr-9) interacts with substrate. ATP-binding positions include 9-10 (TF) and His-17. The substrate site is built by Lys-41, Leu-77, and Arg-91. ATP contacts are provided by residues 92 to 94 (GLR), Glu-102, and 127 to 133 (RQAIASK).

It belongs to the bacterial CoaD family. Homohexamer. Requires Mg(2+) as cofactor.

The protein resides in the cytoplasm. The enzyme catalyses (R)-4'-phosphopantetheine + ATP + H(+) = 3'-dephospho-CoA + diphosphate. It functions in the pathway cofactor biosynthesis; coenzyme A biosynthesis; CoA from (R)-pantothenate: step 4/5. Reversibly transfers an adenylyl group from ATP to 4'-phosphopantetheine, yielding dephospho-CoA (dPCoA) and pyrophosphate. The protein is Phosphopantetheine adenylyltransferase of Cereibacter sphaeroides (strain ATCC 17029 / ATH 2.4.9) (Rhodobacter sphaeroides).